Here is a 452-residue protein sequence, read N- to C-terminus: Probable ECA polymerase (452 aa).

Helical transmembrane passes span 6–26 (FSGL…LTWF), 37–57 (VFFS…TSVL), 63–83 (VGVA…CFYG), 118–138 (VILM…NGFL), 155–175 (GVAL…VYFL), 181–201 (AWLF…MIVG), 207–227 (IIIA…ISLW), 228–248 (MLAA…LKRY), 341–361 (LVVM…GLII), 378–398 (YKAA…IVLA), and 410–430 (VFFL…FWLF).

The protein belongs to the WzyE family. As to quaternary structure, probably part of a complex composed of WzxE, WzyE and WzzE.

The protein resides in the cell inner membrane. Its pathway is bacterial outer membrane biogenesis; enterobacterial common antigen biosynthesis. Its function is as follows. Probably involved in the polymerization of enterobacterial common antigen (ECA) trisaccharide repeat units. The protein is Probable ECA polymerase of Salmonella heidelberg (strain SL476).